The sequence spans 502 residues: Potassium channel KAT3 (502 aa).

The Cytoplasmic segment spans residues 1–67; sequence MPRSSRMNLW…PYDPRYKVWE (67 aa). The chain crosses the membrane as a helical span at residues 68–88; the sequence is TFLIILVVYSAWICPLEFAFL. Residues 89-95 lie on the Extracellular side of the membrane; that stretch reads RYLPSAP. Residues 96-116 traverse the membrane as a helical segment; it reads FVVDDVVNGFFAVDIMLTFFV. Residues 117 to 138 lie on the Cytoplasmic side of the membrane; it reads PFVDKKSYLLVNDPKKIAVRYL. Residues 139 to 159 traverse the membrane as a helical segment; it reads SSWFVFDVCSTVPFHSISLLF. The Extracellular portion of the chain corresponds to 160 to 169; the sequence is NEHGHDLGFK. Residues 170 to 190 traverse the membrane as a helical; Voltage-sensor segment; it reads FLNVLRLWRLRRVSSMFARLE. Residues 191 to 204 lie on the Cytoplasmic side of the membrane; the sequence is KDIRFNYAVIRCTK. Residues 205–225 traverse the membrane as a helical segment; the sequence is LISVTLFAIHCAGCINYLIAD. Residues 226–252 are Extracellular-facing; it reads RYPDPRRTWIGAVMPNFREDGLWIRYV. Residues 253–272 constitute an intramembrane region (pore-forming); sequence TAMYWSITTLTTTGYGDLHA. Residues 273 to 276 are Extracellular-facing; sequence ENAR. A helical transmembrane segment spans residues 277–297; that stretch reads EMLFGICYMLFNLWLTAYLIG. Residues 298 to 502 lie on the Cytoplasmic side of the membrane; it reads NMTNLVVHST…IRSNLQQVNV (205 aa). 381 to 500 serves as a coordination point for a nucleoside 3',5'-cyclic phosphate; that stretch reads LFKGVSSRFI…DIIRSNLQQV (120 aa).

It belongs to the potassium channel family. Plant (TC 1.A.1.4) subfamily.

The protein localises to the membrane. Functionally, probable inward-rectifying potassium channel. Assuming opened or closed conformations in response to the voltage difference across the membrane, the channel is activated by hyperpolarization. The sequence is that of Potassium channel KAT3 from Oryza sativa subsp. japonica (Rice).